Reading from the N-terminus, the 544-residue chain is Chaperonin GroEL (544 aa).

ATP-binding positions include 30-33 (TLGP), Lys-51, 87-91 (DGTTT), Gly-415, and Asp-495.

This sequence belongs to the chaperonin (HSP60) family. Forms a cylinder of 14 subunits composed of two heptameric rings stacked back-to-back. Interacts with the co-chaperonin GroES.

The protein resides in the cytoplasm. It carries out the reaction ATP + H2O + a folded polypeptide = ADP + phosphate + an unfolded polypeptide.. In terms of biological role, together with its co-chaperonin GroES, plays an essential role in assisting protein folding. The GroEL-GroES system forms a nano-cage that allows encapsulation of the non-native substrate proteins and provides a physical environment optimized to promote and accelerate protein folding. In Aeromonas salmonicida, this protein is Chaperonin GroEL.